We begin with the raw amino-acid sequence, 423 residues long: UDP-N-acetylglucosamine 1-carboxyvinyltransferase 1 (423 aa).

23-24 (KN) is a binding site for phosphoenolpyruvate. R96 serves as a coordination point for UDP-N-acetyl-alpha-D-glucosamine. The active-site Proton donor is C120. C120 bears the 2-(S-cysteinyl)pyruvic acid O-phosphothioketal mark. UDP-N-acetyl-alpha-D-glucosamine contacts are provided by residues 125–129 (RPIDL), D309, and V331.

This sequence belongs to the EPSP synthase family. MurA subfamily.

The protein resides in the cytoplasm. It catalyses the reaction phosphoenolpyruvate + UDP-N-acetyl-alpha-D-glucosamine = UDP-N-acetyl-3-O-(1-carboxyvinyl)-alpha-D-glucosamine + phosphate. Its pathway is cell wall biogenesis; peptidoglycan biosynthesis. Cell wall formation. Adds enolpyruvyl to UDP-N-acetylglucosamine. The sequence is that of UDP-N-acetylglucosamine 1-carboxyvinyltransferase 1 from Streptococcus mutans serotype c (strain ATCC 700610 / UA159).